The chain runs to 186 residues: Glutathione-independent glyoxalase DJR-1.2 (186 aa).

Residues Glu-20, Cys-105, and His-124 contribute to the active site.

This sequence belongs to the peptidase C56 family. DJ-1 subfamily. As to expression, expressed in various tissues, including pharyngeal muscles, pharynx-intestinal valve, ventral nerve cord, spermatheca, rectal gland, inner labial (IL) cells of head neurons, phasmid (PHA/PHB) neurons in tail and supporting sheath/socket cells, as well as in head mesodermal cells (HMC), excretory canals and coelomocytes.

It localises to the cytoplasm. The enzyme catalyses methylglyoxal + H2O = (R)-lactate + H(+). Functionally, catalyzes the conversion of methylglyoxal (MG) or glyoxal (GO) to D-lactate or glycolic acid respectively in a single glutathione (GSH)-independent step. May play a role in detoxifying endogenously produced glyoxals. Involved in protection against glyoxal-induced cell death. Protects dopaminergic neurons from glyoxal-dependent neuronal degeneration. This chain is Glutathione-independent glyoxalase DJR-1.2, found in Caenorhabditis elegans.